The following is a 330-amino-acid chain: UPF0324 membrane protein BT_4609 (330 aa).

10 helical membrane-spanning segments follow: residues 16-33 (IYVA…LDYI), 38-60 (AWSA…LTCG), 73-95 (YLLQ…LASG), 99-116 (MEFT…GWFI), 128-150 (SYLI…GPVL), 160-182 (ALGT…GHAL), 189-211 (FGTW…AAYG), 221-240 (IKLT…SFIF), 247-269 (ISIP…LLNG), and 284-306 (TLTI…SVGV).

This sequence belongs to the UPF0324 family.

It is found in the cell membrane. The sequence is that of UPF0324 membrane protein BT_4609 from Bacteroides thetaiotaomicron (strain ATCC 29148 / DSM 2079 / JCM 5827 / CCUG 10774 / NCTC 10582 / VPI-5482 / E50).